Consider the following 674-residue polypeptide: DNA ligase (674 aa).

Residues 34 to 38, 83 to 84, and E114 each bind NAD(+); these read DSEYD and SL. The N6-AMP-lysine intermediate role is filled by K116. The NAD(+) site is built by R137, E174, K290, and K314. The Zn(2+) site is built by C405, C408, C424, and C429. One can recognise a BRCT domain in the interval 587–674; that stretch reads QSGTQFDGKM…KLSLIENTKF (88 aa).

This sequence belongs to the NAD-dependent DNA ligase family. LigA subfamily. It depends on Mg(2+) as a cofactor. Mn(2+) is required as a cofactor.

It carries out the reaction NAD(+) + (deoxyribonucleotide)n-3'-hydroxyl + 5'-phospho-(deoxyribonucleotide)m = (deoxyribonucleotide)n+m + AMP + beta-nicotinamide D-nucleotide.. DNA ligase that catalyzes the formation of phosphodiester linkages between 5'-phosphoryl and 3'-hydroxyl groups in double-stranded DNA using NAD as a coenzyme and as the energy source for the reaction. It is essential for DNA replication and repair of damaged DNA. The protein is DNA ligase of Endomicrobium trichonymphae.